Reading from the N-terminus, the 210-residue chain is 7-methyl-GTP pyrophosphatase (210 aa).

Catalysis depends on Asp-79, which acts as the Proton acceptor.

It belongs to the Maf family. YceF subfamily. Requires a divalent metal cation as cofactor.

The protein localises to the cytoplasm. The catalysed reaction is N(7)-methyl-GTP + H2O = N(7)-methyl-GMP + diphosphate + H(+). Its function is as follows. Nucleoside triphosphate pyrophosphatase that hydrolyzes 7-methyl-GTP (m(7)GTP). May have a dual role in cell division arrest and in preventing the incorporation of modified nucleotides into cellular nucleic acids. The polypeptide is 7-methyl-GTP pyrophosphatase (Burkholderia lata (strain ATCC 17760 / DSM 23089 / LMG 22485 / NCIMB 9086 / R18194 / 383)).